Here is a 314-residue protein sequence, read N- to C-terminus: Epithelial-stromal interaction protein 1 (314 aa).

4 disordered regions span residues 1–72, 200–219, 225–267, and 292–314; these read MYPR…PNET, NRSA…WKLP, PSRA…HQEE, and SQPG…GWGI. The span at 43–58 shows a compositional bias: basic and acidic residues; sequence AEPKGPKLERQGHGDQ. The stretch at 71 to 180 forms a coiled coil; the sequence is ETRRQKIQRI…QEDIRRATLR (110 aa). The segment covering 232-267 has biased composition (basic and acidic residues); it reads AHKDSPQKEDNQKLQKTRDGHQKNKLLETKGQHQEE. The span at 305 to 314 shows a compositional bias: polar residues; it reads NMNSTDGWGI.

Plays a role in M1 macrophage polarization and is required for the proper regulation of gene expression during M1 versus M2 macrophage differentiation. Might play a role in RELA/p65 and STAT1 phosphorylation and nuclear localization upon activation of macrophages. The polypeptide is Epithelial-stromal interaction protein 1 (Epsti1) (Rattus norvegicus (Rat)).